Reading from the N-terminus, the 393-residue chain is Bifunctional enzyme Fae/Hps (393 aa).

The interval methionine 1–valine 161 is formaldehyde-activating enzyme. Histidine 17 acts as the Proton donor in catalysis. Residues aspartate 19, leucine 48, lysine 66, threonine 68, and glutamine 83 each coordinate substrate. The tract at residues methionine 162 to phenylalanine 393 is 3-hexulose-6-phosphate synthase.

In the N-terminal section; belongs to the formaldehyde-activating enzyme family. This sequence in the C-terminal section; belongs to the HPS/KGPDC family. HPS subfamily.

It carries out the reaction 5,6,7,8-tetrahydromethanopterin + formaldehyde = 5,10-methylenetetrahydromethanopterin + H2O. It catalyses the reaction D-ribulose 5-phosphate + formaldehyde = D-arabino-hex-3-ulose 6-phosphate. It participates in carbohydrate biosynthesis; D-ribose 5-phosphate biosynthesis. Catalyzes the condensation of formaldehyde with tetrahydromethanopterin (H(4)MPT) to 5,10-methylenetetrahydromethanopterin. Functionally, catalyzes the reversible formation of ribulose-5-phosphate and formaldehyde from 3-hexulose-6-phosphate. The sequence is that of Bifunctional enzyme Fae/Hps from Methanospirillum hungatei JF-1 (strain ATCC 27890 / DSM 864 / NBRC 100397 / JF-1).